Consider the following 591-residue polypeptide: MLKYKPLLKISKNCEAAILRASKTRLNTIRAYGSTVPKSKSFEQDSRKRTQSWTALRVGAILAATSSVAYLNWHNGQIDNEPKLDMNKQKISPAEVAKHNKPDDCWVVINGYVYDLTRFLPNHPGGQDVIKFNAGKDVTAIFEPLHAPNVIDKYIAPEKKLGPLQGSMPPELVCPPYAPGETKEDIARKEQLKSLLPPLDNIINLYDFEYLASQTLTKQAWAYYSSGANDEVTHRENHNAYHRIFFKPKILVDVRKVDISTDMLGSHVDVPFYVSATALCKLGNPLEGEKDVARGCGQGVTKVPQMISTLASCSPEEIIEAAPSDKQIQWYQLYVNSDRKITDDLVKNVEKLGVKALFVTVDAPSLGQREKDMKLKFSNTKAGPKAMKKTNVEESQGASRALSKFIDPSLTWKDIEELKKKTKLPIVIKGVQRTEDVIKAAEIGVSGVVLSNHGGRQLDFSRAPIEVLAETMPILEQRNLKDKLEVFVDGGVRRGTDVLKALCLGAKGVGLGRPFLYANSCYGRNGVEKAIEILRDEIEMSMRLLGVTSIAELKPDLLDLSTLKARTVGVPNDVLYNEVYEGPTLTEFEDA.

A mitochondrion-targeting transit peptide spans 1-80 (MLKYKPLLKI…LNWHNGQIDN (80 aa)). In terms of domain architecture, Cytochrome b5 heme-binding spans 88 to 165 (KQKISPAEVA…APEKKLGPLQ (78 aa)). Positions 123, 146, 177, 219, and 223 each coordinate heme b. Residues 197-563 (PPLDNIINLY…KPDLLDLSTL (367 aa)) enclose the FMN hydroxy acid dehydrogenase domain. Tyr-223 is a binding site for pyruvate. FMN contacts are provided by residues 275 to 278 (SATA), Ser-308, and Gln-332. Tyr-334 is a binding site for pyruvate. Residue Thr-360 coordinates FMN. Lys-376 contributes to the heme b binding site. Lys-429 lines the FMN pocket. His-453 and Arg-456 together coordinate pyruvate. Residue His-453 is the Proton acceptor of the active site. Residues 489–493 (DGGVR) and 512–513 (GR) contribute to the FMN site.

In the N-terminal section; belongs to the cytochrome b5 family. The protein in the C-terminal section; belongs to the FMN-dependent alpha-hydroxy acid dehydrogenase family. Homotetramer. FMN serves as cofactor. The cofactor is heme b.

The protein resides in the mitochondrion intermembrane space. The catalysed reaction is (S)-lactate + 2 Fe(III)-[cytochrome c] = 2 Fe(II)-[cytochrome c] + pyruvate + 2 H(+). Catalyzes the oxidation of (S)-lactate (L-lactate) to pyruvate with subsequent transfer of electrons to cytochrome c. Is involved in the utilization of (S)-lactate as a sole source of carbon for growth. Can also use ferricyanide as an electron acceptor in vitro. This chain is L-lactate dehydrogenase (cytochrome) (CYB2), found in Saccharomyces cerevisiae (strain ATCC 204508 / S288c) (Baker's yeast).